The sequence spans 335 residues: Large ribosomal subunit protein uL3 (335 aa).

This sequence belongs to the universal ribosomal protein uL3 family. Part of the 50S ribosomal subunit. Forms a cluster with proteins L14 and L24e.

In terms of biological role, one of the primary rRNA binding proteins, it binds directly near the 3'-end of the 23S rRNA, where it nucleates assembly of the 50S subunit. The polypeptide is Large ribosomal subunit protein uL3 (Methanocaldococcus jannaschii (strain ATCC 43067 / DSM 2661 / JAL-1 / JCM 10045 / NBRC 100440) (Methanococcus jannaschii)).